Consider the following 224-residue polypeptide: CRIB domain-containing protein RIC1 (224 aa).

Residues 29–42 (IGFPTDVKHVAHIG) form the CRIB domain. The disordered stretch occupies residues 38-224 (VAHIGSDGPT…SVDTTCNDII (187 aa)). 4 stretches are compositionally biased toward polar residues: residues 69–84 (SRGN…TNQR), 114–132 (PNHN…ASSD), 144–155 (AHGSTDSSNDQE), and 215–224 (SVDTTCNDII).

As to quaternary structure, interacts with ARAC11/ROP1. As to expression, expressed in columella cells from the root tip and epidermal cells at the base of lateral roots, leaves, stems, flowers, anthers, pollen and siliques.

It is found in the cytoplasm. It localises to the cytoskeleton. Functions as a downstream effector of Rho-related GTP binding proteins of the 'Rho of Plants' (ROPs) family. Participates in the propagation of ROP GTPase signals in specific cellular responses. Required for cortical microtubule organization. Promotes microtubule bundling and formation of well-ordered microtubule arrays in the neck region of pavement cells. This restricts cell lateral expansion to generate the narrow neck morphology of pavement cells. Its function is inhibited when it interacts with activated ARAC4/ROP2. Represses ARAC4/ROP2 activation and antagonizes the RIC4-actin pathway that promotes the assembly of cortical actin microfilaments. Acts as a downstream effector of ARAC3/ROP6 which functions in a signaling pathway that negatively regulates clathrin-mediated endocytosis and internalization of PIN1 and PIN2. Required for the asymmetric auxin distribution during root gravitropism and vascular patterning. Positively regulates auxin responses, but negatively regulates ABA responses during lateral root development and primary root elongation. The chain is CRIB domain-containing protein RIC1 (RIC1) from Arabidopsis thaliana (Mouse-ear cress).